The primary structure comprises 388 residues: Glutamine transporter 2 (388 aa).

11 helical membrane passes run 5-27 (LFGSALILSGTALGAGMLAIPMV), 31-53 (FGLFYSTLLMLIICAGTTYAALL), 86-106 (LFYLLLFCMLIAYILGAADLI), 121-141 (FAQVAFTLFASAFVVCGTQII), 147-167 (LLFFFMISMLVLTLIILIPGM), 186-206 (TSTILFTSFASMPVIPSLVAY), 218-238 (MVILGSIIPLICYLVWLYAVV), 268-288 (IILSIFTSLALLTSFLGVAMA), 302-322 (IVTYVCTFILPLLGAGLAADQ), 326-346 (VLGYAGVILVFLAIFIPLAMV), and 368-388 (GGKLALGLTLLFGLLLLISQI).

The protein belongs to the amino acid/polyamine transporter 2 family.

Its subcellular location is the cell inner membrane. Its function is as follows. Seems to be involved in glutamine transport. Complements an E.coli glnP deletion mutant. The protein is Glutamine transporter 2 of Aliivibrio fischeri (strain ATCC 700601 / ES114) (Vibrio fischeri).